Consider the following 630-residue polypeptide: Angiotensin-converting enzyme-related protein (630 aa).

A signal peptide spans 1–22; that stretch reads MGACNITVLLLVIMLWLPHGLS. Residues 28 to 615 form the Peptidase M2 domain; that stretch reads SASVLEARRF…SRLGVPLGWG (588 aa). Disulfide bonds link cysteine 142-cysteine 150 and cysteine 344-cysteine 362. Histidine 375 provides a ligand contact to Zn(2+). Residue glutamate 376 is the Proton acceptor of the active site. Histidine 379 and glutamate 403 together coordinate Zn(2+). Histidine 505 serves as the catalytic Proton donor. Cysteine 530 and cysteine 548 are disulfide-bonded.

This sequence belongs to the peptidase M2 family. Zn(2+) serves as cofactor. Glycosylated.

Its subcellular location is the secreted. The protein resides in the extracellular space. It carries out the reaction Release of a C-terminal dipeptide, oligopeptide-|-Xaa-Yaa, when Xaa is not Pro, and Yaa is neither Asp nor Glu. Thus, conversion of angiotensin I to angiotensin II, with increase in vasoconstrictor activity, but no action on angiotensin II.. Inhibited by captopril, lisinopril, trandolaprilat, fosinoprilat and enalaprilat. Its function is as follows. May be involved in the specific maturation or degradation of a number of bioactive peptides. May have a role in the specification of heart progenitors. This chain is Angiotensin-converting enzyme-related protein (Acer), found in Drosophila melanogaster (Fruit fly).